A 225-amino-acid polypeptide reads, in one-letter code: NAD(P)H-hydrate epimerase (225 aa).

A YjeF N-terminal domain is found at 9–209 (MQTIDNYTVE…DIGLLTPQDF (201 aa)). Residue 57–61 (NNGAD) coordinates (6S)-NADPHX. 2 residues coordinate K(+): N58 and D119. (6S)-NADPHX-binding positions include 123-129 (GTGLNNL) and D152. T155 contacts K(+).

Belongs to the NnrE/AIBP family. The cofactor is K(+).

It carries out the reaction (6R)-NADHX = (6S)-NADHX. The catalysed reaction is (6R)-NADPHX = (6S)-NADPHX. Functionally, catalyzes the epimerization of the S- and R-forms of NAD(P)HX, a damaged form of NAD(P)H that is a result of enzymatic or heat-dependent hydration. This is a prerequisite for the S-specific NAD(P)H-hydrate dehydratase to allow the repair of both epimers of NAD(P)HX. The polypeptide is NAD(P)H-hydrate epimerase (Leuconostoc sp. (strain C2)).